The chain runs to 338 residues: Lipoate-protein ligase A (338 aa).

One can recognise a BPL/LPL catalytic domain in the interval 29 to 216; that stretch reads DPNQRVLFLW…AFFSHYGERV (188 aa). ATP-binding positions include Arg-71, 76–79, and Lys-134; that span reads GAVF. Residue Lys-134 coordinates (R)-lipoate.

It belongs to the LplA family. Monomer.

The protein localises to the cytoplasm. It carries out the reaction L-lysyl-[lipoyl-carrier protein] + (R)-lipoate + ATP = N(6)-[(R)-lipoyl]-L-lysyl-[lipoyl-carrier protein] + AMP + diphosphate + H(+). It functions in the pathway protein modification; protein lipoylation via exogenous pathway; protein N(6)-(lipoyl)lysine from lipoate: step 1/2. Its pathway is protein modification; protein lipoylation via exogenous pathway; protein N(6)-(lipoyl)lysine from lipoate: step 2/2. In terms of biological role, catalyzes both the ATP-dependent activation of exogenously supplied lipoate to lipoyl-AMP and the transfer of the activated lipoyl onto the lipoyl domains of lipoate-dependent enzymes. This Aeromonas hydrophila subsp. hydrophila (strain ATCC 7966 / DSM 30187 / BCRC 13018 / CCUG 14551 / JCM 1027 / KCTC 2358 / NCIMB 9240 / NCTC 8049) protein is Lipoate-protein ligase A.